Reading from the N-terminus, the 78-residue chain is Neurogranin (78 aa).

The residue at position 1 (Met-1) is an N-acetylmethionine. Cysteines 3 and 51 form a disulfide. Positions 26-47 (ANAAAAKIQASFRGHMARKKIK) constitute an IQ domain. Ser-36 is subject to Phosphoserine; by PHK and PKC. The tract at residues 39 to 78 (GHMARKKIKSGECGRKGPGPGGPGGAGGARGGAGGGPSGD) is disordered. Residues 48 to 78 (SGECGRKGPGPGGPGGAGGARGGAGGGPSGD) enclose the Collagen-like domain. The span at 54 to 78 (KGPGPGGPGGAGGARGGAGGGPSGD) shows a compositional bias: gly residues. Position 68 is a citrulline; partial (Arg-68). Position 68 is an omega-N-methylarginine (Arg-68).

This sequence belongs to the neurogranin family. In terms of assembly, interacts with apo-calmodulin; this interaction decreases the affinity of calmodulin for calcium ions. Disulfide bond formation is redox-sensitive. The cysteine residues are readily oxidized by several nitric acid (NO) donors and other oxidants to form intramolecular disulfide. Cys-51 can form a disulfide with any other of the cysteine residues with an order of reactivity Cys-9 &gt; Cys-4 &gt; Cys-3. In terms of processing, phosphorylated at Ser-36 by PHK and PKC, phosphorylation prevents interaction with Calmodulin and interrupts several learning- and memory-associated functions.

Its subcellular location is the cytoplasm. It is found in the synapse. It localises to the cell projection. The protein resides in the dendritic spine. Regulates the affinity of calmodulin for calcium. Involved in synaptic plasticity and spatial learning. The polypeptide is Neurogranin (Nrgn) (Mus musculus (Mouse)).